Reading from the N-terminus, the 314-residue chain is 3'-5' exoribonuclease YhaM (314 aa).

Positions 163 to 279 (HVVSMLDLAK…LHYIDNLDAK (117 aa)) constitute an HD domain.

Belongs to the YhaM family.

Its function is as follows. Shows a 3'-5' exoribonuclease activity. The polypeptide is 3'-5' exoribonuclease YhaM (Bacillus mycoides (strain KBAB4) (Bacillus weihenstephanensis)).